Here is a 140-residue protein sequence, read N- to C-terminus: MFDIGFSELLLIAVVALVVLGPERLPKAARFAGLLVRRARTQWESIKQELERELEAEALKRNLENAQQVIHDAQAQLQSNQQDMNIQNSISILHEQTKRDIHPDRNTNTLELGTAVHHVHVTSPPPSTSTHGNNGQEKSQ.

The helical transmembrane segment at 1–21 threads the bilayer; sequence MFDIGFSELLLIAVVALVVLG. The disordered stretch occupies residues 119 to 140; sequence VHVTSPPPSTSTHGNNGQEKSQ. Polar residues predominate over residues 128 to 140; that stretch reads TSTHGNNGQEKSQ.

Belongs to the TatB family. In terms of assembly, the Tat system comprises two distinct complexes: a TatABC complex, containing multiple copies of TatA, TatB and TatC subunits, and a separate TatA complex, containing only TatA subunits. Substrates initially bind to the TatABC complex, which probably triggers association of the separate TatA complex to form the active translocon.

Its subcellular location is the cell inner membrane. Functionally, part of the twin-arginine translocation (Tat) system that transports large folded proteins containing a characteristic twin-arginine motif in their signal peptide across membranes. Together with TatC, TatB is part of a receptor directly interacting with Tat signal peptides. TatB may form an oligomeric binding site that transiently accommodates folded Tat precursor proteins before their translocation. The sequence is that of Sec-independent protein translocase protein TatB from Xylella fastidiosa (strain 9a5c).